The sequence spans 234 residues: UPF0758 protein STH371 (234 aa).

The region spanning 110–232 is the MPN domain; that stretch reads DLCNPRAVFE…YTSFRERGLL (123 aa). Residues H181, H183, and D194 each coordinate Zn(2+). Residues 181 to 194 carry the JAMM motif motif; that stretch reads HNHPSGDPTPSRED.

This sequence belongs to the UPF0758 family.

The polypeptide is UPF0758 protein STH371 (Symbiobacterium thermophilum (strain DSM 24528 / JCM 14929 / IAM 14863 / T)).